The chain runs to 224 residues: Deoxyribose-phosphate aldolase (224 aa).

The Proton donor/acceptor role is filled by D94. The active-site Schiff-base intermediate with acetaldehyde is the K156. The active-site Proton donor/acceptor is the K184.

This sequence belongs to the DeoC/FbaB aldolase family. DeoC type 1 subfamily.

Its subcellular location is the cytoplasm. It carries out the reaction 2-deoxy-D-ribose 5-phosphate = D-glyceraldehyde 3-phosphate + acetaldehyde. It participates in carbohydrate degradation; 2-deoxy-D-ribose 1-phosphate degradation; D-glyceraldehyde 3-phosphate and acetaldehyde from 2-deoxy-alpha-D-ribose 1-phosphate: step 2/2. In terms of biological role, catalyzes a reversible aldol reaction between acetaldehyde and D-glyceraldehyde 3-phosphate to generate 2-deoxy-D-ribose 5-phosphate. The chain is Deoxyribose-phosphate aldolase from Methanocella arvoryzae (strain DSM 22066 / NBRC 105507 / MRE50).